The sequence spans 295 residues: G1/S-specific cyclin-D1 (295 aa).

In terms of domain architecture, Cyclin N-terminal spans 28 to 152 (LRAMLKAEET…LLVNKLKWNL (125 aa)). Residues 262 to 295 (AQQNMDPKAAEEEEEEEEEVDLACTPTDVRDVDI) are disordered. A Glycyl lysine isopeptide (Lys-Gly) (interchain with G-Cter in ubiquitin) cross-link involves residue K269. A compositionally biased stretch (acidic residues) spans 272 to 282 (EEEEEEEEEVD). Phosphothreonine is present on T286.

It belongs to the cyclin family. Cyclin D subfamily. As to quaternary structure, interacts with either CDK4 or CDK6 protein kinase to form a serine/threonine kinase holoenzyme complex. The cyclin subunit imparts substrate specificity to the complex. Component of the ternary complex CCND1/CDK4/CDKN1B required for nuclear translocation and modulation of CDK4-mediated kinase activity. Interacts directly with CDKN1B. Can form similar complexes with either CDKN1A or CDKN2A. Interacts with UHRF2; the interaction ubiquitinates CCND1 and appears to occur independently of phosphorylation. Interacts with USP2. Interacts (via cyclin N-terminal domain) with INSM1 (via N-terminal region); the interaction competes with the binding of CCND1 to CDK4 during cell cycle progression and inhibits CDK4 activity. Interacts with CDK4; the interaction is prevented with the binding of CCND1 to INSM1 during cell cycle progression. In terms of processing, phosphorylation at Thr-286 by MAP kinases is required for ubiquitination and degradation by the DCX(AMBRA1) complex. It also plays an essential role for recognition by the FBXO31 component of SCF (SKP1-cullin-F-box) protein ligase complex following DNA damage. Post-translationally, ubiquitinated at Lys-269 by the DCX(AMBRA1) complex during the transition from G1 to S cell phase, leading to its degradation: ubiquitination is dependent on Thr-286 phosphorylation. The DCX(AMBRA1) complex represents the major regulator of CCND1 stability during the G1/S transition. Also ubiquitinated by the SCF(FBXO4) and Cul7-RING(FBXW8) ubiquitin-protein ligase complexes. Following DNA damage it is ubiquitinated by the SCF(FBXO31) protein ligase complex. SCF(FBXO31) ubiquitination is dependent on Thr-286 phosphorylation. Ubiquitinated also by UHRF2 apparently in a phosphorylation-independent manner. Ubiquitination leads to its degradation and G1 arrest. Deubiquitinated by USP2; leading to its stabilization.

The protein resides in the nucleus. The protein localises to the cytoplasm. Its subcellular location is the nucleus membrane. Regulatory component of the cyclin D1-CDK4 (DC) complex that phosphorylates and inhibits members of the retinoblastoma (RB) protein family including RB1 and regulates the cell-cycle during G(1)/S transition. Phosphorylation of RB1 allows dissociation of the transcription factor E2F from the RB/E2F complex and the subsequent transcription of E2F target genes which are responsible for the progression through the G(1) phase. Hypophosphorylates RB1 in early G(1) phase. Cyclin D-CDK4 complexes are major integrators of various mitogenenic and antimitogenic signals. Also a substrate for SMAD3, phosphorylating SMAD3 in a cell-cycle-dependent manner and repressing its transcriptional activity. Component of the ternary complex, cyclin D1/CDK4/CDKN1B, required for nuclear translocation and activity of the cyclin D-CDK4 complex. Exhibits transcriptional corepressor activity with INSM1 on the NEUROD1 and INS promoters in a cell cycle-independent manner. The polypeptide is G1/S-specific cyclin-D1 (CCND1) (Pongo abelii (Sumatran orangutan)).